The following is an 86-amino-acid chain: Putative defensin-like protein 189 (86 aa).

The first 28 residues, 1 to 28, serve as a signal peptide directing secretion; it reads MKMAKSANEIGFITCLVVFLVLTGQSNG. Disulfide bonds link cysteine 39–cysteine 85, cysteine 52–cysteine 71, cysteine 57–cysteine 80, and cysteine 61–cysteine 82.

The protein belongs to the DEFL family.

The protein localises to the secreted. In Arabidopsis thaliana (Mouse-ear cress), this protein is Putative defensin-like protein 189.